The following is a 183-amino-acid chain: DELTA-miturgitoxin-Cp1a (183 aa).

The first 20 residues, 1 to 20 (MKFSLFFSVFFLAVLHACLS), serve as a signal peptide directing secretion. Positions 21 to 47 (ESEIDLEDEEHFMSSDSFLSEIQDESR) are excised as a propeptide. The short motif at 44-47 (DESR) is the Processing quadruplet motif element. Cystine bridges form between Cys51–Cys66, Cys58–Cys75, Cys65–Cys88, Cys77–Cys86, Cys115–Cys130, Cys122–Cys139, Cys129–Cys157, and Cys141–Cys155. Domain repeat units follow at residues 51–77 (CIER…KCTC) and 115–141 (CVPK…QCKC). The 2 X approximate repeats with cysteine pattern C-C-CC-C-C stretch occupies residues 51–141 (CIERNKECTN…GGIFKYQCKC (91 aa)). The segment at 164–177 (QAIEGALRIAKKLI) is predicted alpha-helix. Position 181 is a tryptophan amide (Trp181).

It belongs to the neurotoxin 19 (CSTX) family. Double-CSTX subfamily. In terms of processing, cleavage of the propeptide depends on the processing quadruplet motif (XXXR, with at least one of X being E). As to expression, expressed by the venom gland.

It localises to the secreted. The protein resides in the target cell membrane. Its function is as follows. Spider venom toxin that exhibits cytolytic activity by forming an alpha-helix across the membrane. Lethal to insect larvae. Causes instant paralysis and death in the larvae of the flesh fly (S.carnaria) at doses of 20 ug/g, at doses of less than 10 ug/g causes reversible paralysis. Has cytolytic activity against insect Sf9 cells. Causes stable and irreversible depolarization of fly muscle fibers, leading to contracture at higher toxin concentrations. Destabilizes membranes. In Cheiracanthium punctorium (Yellow sac spider), this protein is DELTA-miturgitoxin-Cp1a.